Here is a 337-residue protein sequence, read N- to C-terminus: Protein ABHD13 (337 aa).

The chain crosses the membrane as a helical; Signal-anchor for type II membrane protein span at residues 30 to 50 (LLALILTFHLYGGFVLLGLIL). Active-site charge relay system residues include S193, D268, and H298. The N-linked (GlcNAc...) asparagine glycan is linked to N299.

Belongs to the serine esterase family.

Its subcellular location is the membrane. This Danio rerio (Zebrafish) protein is Protein ABHD13.